The sequence spans 365 residues: Peptide chain release factor 2 (365 aa).

N5-methylglutamine is present on Q252.

Belongs to the prokaryotic/mitochondrial release factor family. Methylated by PrmC. Methylation increases the termination efficiency of RF2.

Its subcellular location is the cytoplasm. In terms of biological role, peptide chain release factor 2 directs the termination of translation in response to the peptide chain termination codons UGA and UAA. In Shewanella baltica (strain OS223), this protein is Peptide chain release factor 2.